A 615-amino-acid polypeptide reads, in one-letter code: (+)-alpha-pinene synthase TPS2, chloroplastic (615 aa).

The transit peptide at 1 to 55 directs the protein to the chloroplast; it reads MHCMAVRHFAPSSSLSIFSSTNINNHFFGREIFTPKTSNITTKKSRSRPNCNPIQ. Arg-330, Asp-367, Asp-371, Arg-509, and Asp-512 together coordinate (2E)-geranyl diphosphate. Asp-367 and Asp-371 together coordinate Mg(2+). The DDXXD motif signature appears at 367–371; the sequence is DDIYD. 3 residues coordinate Mg(2+): Asp-512, Thr-516, and Glu-520.

Belongs to the terpene synthase family. Tpsb subfamily. Mg(2+) is required as a cofactor. The cofactor is Mn(2+). K(+) serves as cofactor. In terms of tissue distribution, trichome.

It localises to the plastid. The protein resides in the chloroplast. The catalysed reaction is (2E)-geranyl diphosphate = (1R,5R)-alpha-pinene + diphosphate. The enzyme catalyses (2E)-geranyl diphosphate = (1R,5R)-beta-pinene + diphosphate. It catalyses the reaction (2E)-geranyl diphosphate = (4S)-limonene + diphosphate. It carries out the reaction (2E)-geranyl diphosphate = beta-myrcene + diphosphate. Its pathway is secondary metabolite biosynthesis; terpenoid biosynthesis. The protein operates within terpene metabolism; (-)-alpha-pinene biosynthesis; (-)-alpha-pinene from geranyl diphosphate: step 1/1. Functionally, involved in monoterpene (C10) olefins biosynthesis, constituants of cannabinoids and terpenoids-rich resins. Catalyzes mainly the conversion of (2E)-geranyl diphosphate to (+)-alpha-pinene, and also produces minor products such as (-)-limonene, (+)-beta-pinene and beta-myrcene. The sequence is that of (+)-alpha-pinene synthase TPS2, chloroplastic from Cannabis sativa (Hemp).